A 193-amino-acid chain; its full sequence is MRTRLRFVLVAAALALLSACKEDVAQSIVPQDMTPETLGHYCQMNLLEHPGPKAQIFLEGSPAPLFFSQVRDAIAYARGPEQIAPILVIYVNDMGAAGATWDQPGDGNWIAADKAFYVVGSARRGGMGAPEAVPFSSRDEAAAFVLAEGGQVLALADITDAMVLTPVETGSEPRADDEDYLGRLRALPHPAGG.

An N-terminal signal peptide occupies residues 1–19 (MRTRLRFVLVAAALALLSA). A lipid anchor (N-palmitoyl cysteine) is attached at Cys20. The S-diacylglycerol cysteine moiety is linked to residue Cys20.

This sequence belongs to the NosL family. In terms of assembly, monomer. Apo-NosL can form homodimers.

Its subcellular location is the cell membrane. In terms of biological role, may act as a metallochaperone involved in nitrous oxide reductase assembly. Specifically binds Cu(+). This Achromobacter cycloclastes protein is Copper-binding lipoprotein NosL.